Reading from the N-terminus, the 240-residue chain is tRNA (guanine-N(1)-)-methyltransferase (240 aa).

S-adenosyl-L-methionine is bound by residues Gly-110 and 129–134; that span reads LGDFVL.

Belongs to the RNA methyltransferase TrmD family. Homodimer.

The protein resides in the cytoplasm. It catalyses the reaction guanosine(37) in tRNA + S-adenosyl-L-methionine = N(1)-methylguanosine(37) in tRNA + S-adenosyl-L-homocysteine + H(+). Functionally, specifically methylates guanosine-37 in various tRNAs. The sequence is that of tRNA (guanine-N(1)-)-methyltransferase from Clostridium botulinum (strain ATCC 19397 / Type A).